The sequence spans 147 residues: Thyrotropin subunit beta (147 aa).

The signal sequence occupies residues methionine 1–serine 20. 6 disulfides stabilise this stretch: cysteine 22-cysteine 72, cysteine 36-cysteine 87, cysteine 39-cysteine 126, cysteine 47-cysteine 103, cysteine 51-cysteine 105, and cysteine 108-cysteine 115. A glycan (N-linked (GlcNAc...) asparagine) is linked at asparagine 43.

Belongs to the glycoprotein hormones subunit beta family. Heterodimer of a common alpha chain and a unique beta chain which confers biological specificity to thyrotropin, lutropin, follitropin and gonadotropin.

The protein resides in the secreted. Its function is as follows. Indispensable for the control of thyroid structure and metabolism. May play some role in the biological processes of the immature fishes. The chain is Thyrotropin subunit beta (tshb) from Anguilla anguilla (European freshwater eel).